A 954-amino-acid chain; its full sequence is Glycine dehydrogenase (decarboxylating) (954 aa).

N6-(pyridoxal phosphate)lysine is present on K706.

This sequence belongs to the GcvP family. The glycine cleavage system is composed of four proteins: P, T, L and H. Pyridoxal 5'-phosphate serves as cofactor.

It carries out the reaction N(6)-[(R)-lipoyl]-L-lysyl-[glycine-cleavage complex H protein] + glycine + H(+) = N(6)-[(R)-S(8)-aminomethyldihydrolipoyl]-L-lysyl-[glycine-cleavage complex H protein] + CO2. In terms of biological role, the glycine cleavage system catalyzes the degradation of glycine. The P protein binds the alpha-amino group of glycine through its pyridoxal phosphate cofactor; CO(2) is released and the remaining methylamine moiety is then transferred to the lipoamide cofactor of the H protein. This Thermosynechococcus vestitus (strain NIES-2133 / IAM M-273 / BP-1) protein is Glycine dehydrogenase (decarboxylating).